Reading from the N-terminus, the 256-residue chain is Tryptophan synthase alpha chain (256 aa).

Active-site proton acceptor residues include Glu46 and Asp57.

This sequence belongs to the TrpA family. As to quaternary structure, tetramer of two alpha and two beta chains.

It carries out the reaction (1S,2R)-1-C-(indol-3-yl)glycerol 3-phosphate + L-serine = D-glyceraldehyde 3-phosphate + L-tryptophan + H2O. It functions in the pathway amino-acid biosynthesis; L-tryptophan biosynthesis; L-tryptophan from chorismate: step 5/5. Functionally, the alpha subunit is responsible for the aldol cleavage of indoleglycerol phosphate to indole and glyceraldehyde 3-phosphate. The sequence is that of Tryptophan synthase alpha chain from Bacteroides thetaiotaomicron (strain ATCC 29148 / DSM 2079 / JCM 5827 / CCUG 10774 / NCTC 10582 / VPI-5482 / E50).